The chain runs to 364 residues: DNA replication and repair protein RecF (364 aa).

ATP is bound at residue 30 to 37 (GRNAQGKT).

This sequence belongs to the RecF family.

It is found in the cytoplasm. Functionally, the RecF protein is involved in DNA metabolism; it is required for DNA replication and normal SOS inducibility. RecF binds preferentially to single-stranded, linear DNA. It also seems to bind ATP. This chain is DNA replication and repair protein RecF, found in Pelotomaculum thermopropionicum (strain DSM 13744 / JCM 10971 / SI).